The primary structure comprises 527 residues: DUF21 domain-containing protein At1g47330 (527 aa).

At 1–15 (MSSDIPCCGTTFSLY) the chain is on the extracellular side. One can recognise a CNNM transmembrane domain in the interval 8-191 (CGTTFSLYVV…GKGGDLTTDE (184 aa)). The chain crosses the membrane as a helical span at residues 16–36 (VVIIIALVAFAGLMAGLTLGL). Residues 37-70 (MSLGLVDLEVLIKSGRPQDRINAGKIFPVVKNQH) are Cytoplasmic-facing. A helical membrane pass occupies residues 71–91 (LLLCTLLIGNSMAMEALPIFL). Topologically, residues 92-93 (DK) are extracellular. The chain crosses the membrane as a helical span at residues 94 to 114 (IVPPWLAILLSVTLILVFGEI). The Cytoplasmic portion of the chain corresponds to 115-126 (MPQAVCTRYGLK). The helical transmembrane segment at 127 to 147 (VGAIMAPFVRVLLVLFFPISY) threads the bilayer. The Extracellular portion of the chain corresponds to 148-527 (PISKVLDWML…PKHEESTQTL (380 aa)). CBS domains follow at residues 210-271 (MTPI…EVPL), 274-334 (MSMR…TKDE), and 366-435 (KSEN…ILDE). Disordered regions lie at residues 307–335 (KDLD…KDEL), 358–384 (ETGD…LLAA), and 464–527 (ITQS…TQTL). Position 315 is a phosphoserine (Ser-315). Residues 358–369 (ETGDAKSGKSEN) are compositionally biased toward basic and acidic residues. Residues 464-501 (ITQSSSGSTSPNQTSHMATPDSSPTTKPSNSSPTRKPS) show a composition bias toward low complexity. An N-linked (GlcNAc...) asparagine glycan is attached at Asn-475. A compositionally biased stretch (polar residues) spans 502-515 (VSSPTREPSDSSHS). Residues 518 to 527 (PKHEESTQTL) are compositionally biased toward basic and acidic residues.

Its subcellular location is the membrane. In Arabidopsis thaliana (Mouse-ear cress), this protein is DUF21 domain-containing protein At1g47330 (CBSDUF7).